A 340-amino-acid chain; its full sequence is Phospho-N-acetylmuramoyl-pentapeptide-transferase (340 aa).

Helical transmembrane passes span 24 to 44, 69 to 89, 95 to 115, 129 to 149, 156 to 176, 196 to 216, 235 to 255, 260 to 280, and 316 to 336; these read VPFG…LPVL, TMGG…GSGW, AVAL…WLVI, LLLQ…QGIP, GIGA…VLVG, ALVL…LVAF, LFMG…LALL, WALA…ILQV, and VVGC…AWWH.

This sequence belongs to the glycosyltransferase 4 family. MraY subfamily. Requires Mg(2+) as cofactor.

It is found in the cell inner membrane. It catalyses the reaction UDP-N-acetyl-alpha-D-muramoyl-L-alanyl-gamma-D-glutamyl-meso-2,6-diaminopimeloyl-D-alanyl-D-alanine + di-trans,octa-cis-undecaprenyl phosphate = di-trans,octa-cis-undecaprenyl diphospho-N-acetyl-alpha-D-muramoyl-L-alanyl-D-glutamyl-meso-2,6-diaminopimeloyl-D-alanyl-D-alanine + UMP. Its pathway is cell wall biogenesis; peptidoglycan biosynthesis. Its function is as follows. Catalyzes the initial step of the lipid cycle reactions in the biosynthesis of the cell wall peptidoglycan: transfers peptidoglycan precursor phospho-MurNAc-pentapeptide from UDP-MurNAc-pentapeptide onto the lipid carrier undecaprenyl phosphate, yielding undecaprenyl-pyrophosphoryl-MurNAc-pentapeptide, known as lipid I. This Synechococcus sp. (strain JA-3-3Ab) (Cyanobacteria bacterium Yellowstone A-Prime) protein is Phospho-N-acetylmuramoyl-pentapeptide-transferase.